The chain runs to 426 residues: Glutamate-1-semialdehyde 2,1-aminomutase (426 aa).

Lysine 265 is subject to N6-(pyridoxal phosphate)lysine.

The protein belongs to the class-III pyridoxal-phosphate-dependent aminotransferase family. HemL subfamily. Homodimer. Pyridoxal 5'-phosphate serves as cofactor.

The protein localises to the cytoplasm. The catalysed reaction is (S)-4-amino-5-oxopentanoate = 5-aminolevulinate. The protein operates within porphyrin-containing compound metabolism; protoporphyrin-IX biosynthesis; 5-aminolevulinate from L-glutamyl-tRNA(Glu): step 2/2. This is Glutamate-1-semialdehyde 2,1-aminomutase from Salmonella heidelberg (strain SL476).